The sequence spans 68 residues: Conotoxin reg3.14 (68 aa).

A signal peptide spans 1–22 (MMSKLGVLLTICLLLFPLSVLP). Residues 23-52 (LDGDQPADQPAERMQDISAEQNPWFDPVKR) constitute a propeptide that is removed on maturation. 3 disulfides stabilise this stretch: C53–C68, C54–C64, and C59–C67.

Belongs to the conotoxin M superfamily. In terms of tissue distribution, expressed by the venom duct.

It is found in the secreted. This chain is Conotoxin reg3.14, found in Conus regius (Crown cone).